Consider the following 118-residue polypeptide: MKLRANRVGEQMKKELGDIISRKIKDPRVGFVTVTDVQVSGDLQIATVYISVLGDEEQKDSTLKGLAKAKGFIRSEIGQRIRLRKTPEISFEFDESIGYGHRIDTLLHEINKEGKREE.

Belongs to the RbfA family. Monomer. Binds 30S ribosomal subunits, but not 50S ribosomal subunits or 70S ribosomes.

The protein resides in the cytoplasm. Its function is as follows. One of several proteins that assist in the late maturation steps of the functional core of the 30S ribosomal subunit. Associates with free 30S ribosomal subunits (but not with 30S subunits that are part of 70S ribosomes or polysomes). Required for efficient processing of 16S rRNA. May interact with the 5'-terminal helix region of 16S rRNA. In Bacillus cereus (strain AH187), this protein is Ribosome-binding factor A.